Here is an 82-residue protein sequence, read N- to C-terminus: Putative membrane protein insertion efficiency factor (82 aa).

It belongs to the UPF0161 family.

The protein resides in the cell inner membrane. Could be involved in insertion of integral membrane proteins into the membrane. This chain is Putative membrane protein insertion efficiency factor, found in Rickettsia rickettsii (strain Iowa).